A 105-amino-acid polypeptide reads, in one-letter code: MVGQRIRIRLKAYDYRVLDTSTGEIVDTAKRTGAQVAGPIPLPTVKNKYCVLRSPHVDKKSREAFEIRTHKRLIDILEPTQQTVDALMRLDLPAGVDVEIKAFEK.

The protein belongs to the universal ribosomal protein uS10 family. Part of the 30S ribosomal subunit.

Its function is as follows. Involved in the binding of tRNA to the ribosomes. The sequence is that of Small ribosomal subunit protein uS10 from Acidobacterium capsulatum (strain ATCC 51196 / DSM 11244 / BCRC 80197 / JCM 7670 / NBRC 15755 / NCIMB 13165 / 161).